Reading from the N-terminus, the 205-residue chain is Protein N-terminal glutamine amidohydrolase (205 aa).

Residues Cys-20, His-74, and Asp-90 contribute to the active site.

The protein belongs to the NTAQ1 family. As to quaternary structure, monomer.

It carries out the reaction N-terminal L-glutaminyl-[protein] + H2O = N-terminal L-glutamyl-[protein] + NH4(+). Its function is as follows. Mediates the side-chain deamidation of N-terminal glutamine residues to glutamate, an important step in N-end rule pathway of protein degradation. Conversion of the resulting N-terminal glutamine to glutamate renders the protein susceptible to arginylation, polyubiquitination and degradation as specified by the N-end rule. Does not act on substrates with internal or C-terminal glutamine and does not act on non-glutamine residues in any position. The protein is Protein N-terminal glutamine amidohydrolase (tun) of Drosophila grimshawi (Hawaiian fruit fly).